Here is a 664-residue protein sequence, read N- to C-terminus: E3 ubiquitin-protein ligase CHFR (664 aa).

The FHA domain maps to 38 to 89 (WTIGRRRGCDLSFPSNKLVSGDHCKLTVDEISGEVTLEDTSTNGTVINKLQV). 2 disordered regions span residues 170-220 (LEEP…GRSS) and 245-264 (ESKDHEELEPAKKKMKGDGE). Over residues 174–202 (QPSTSTSDLLPTASTSSTEPELTSAGQKH) the composition is skewed to polar residues. Low complexity predominate over residues 203 to 215 (SSSSGPGNTSISP). A compositionally biased stretch (basic and acidic residues) spans 245–263 (ESKDHEELEPAKKKMKGDG). The RING-type zinc finger occupies 303 to 342 (CIICQDLLHDCVSLQPCMHTFCAACYSGWMERSSLCPTCR). A Phosphothreonine modification is found at threonine 385. Residues 389–413 (LQPKVRRSFSDEEGSSEDLLELSDV) are disordered. Acidic residues predominate over residues 399 to 413 (DEEGSSEDLLELSDV). A PBZ-type zinc finger spans residues 633–655 (PDCYWGRNCRTQVKAHHAMKFNH).

It belongs to the CHFR family. As to quaternary structure, interacts with HDAC1 and HDAC2. Interacts with PML (with sumoylated form of PML). In terms of processing, poly-ADP-ribosylated. In addition to binding non covalently poly(ADP-ribose) via its PBZ-type zinc finger, the protein is also covalently poly-ADP-ribosylated by PARP1. Post-translationally, autoubiquitinated; may regulate its cellular level. Phosphorylated by PKB. Phosphorylation may affect its E3 ligase activity.

It is found in the nucleus. Its subcellular location is the PML body. The catalysed reaction is S-ubiquitinyl-[E2 ubiquitin-conjugating enzyme]-L-cysteine + [acceptor protein]-L-lysine = [E2 ubiquitin-conjugating enzyme]-L-cysteine + N(6)-ubiquitinyl-[acceptor protein]-L-lysine.. It functions in the pathway protein modification; protein ubiquitination. In terms of biological role, E3 ubiquitin-protein ligase that functions in the antephase checkpoint by actively delaying passage into mitosis in response to microtubule poisons. Acts in early prophase before chromosome condensation, when the centrosome move apart from each other along the periphery of the nucleus. Probably involved in signaling the presence of mitotic stress caused by microtubule poisons by mediating the 'Lys-48'-linked ubiquitination of target proteins, leading to their degradation by the proteasome. Promotes the ubiquitination and subsequent degradation of AURKA and PLK1. Probably acts as a tumor suppressor, possibly by mediating the polyubiquitination of HDAC1, leading to its degradation. May also promote the formation of 'Lys-63'-linked polyubiquitin chains and functions with the specific ubiquitin-conjugating UBC13-MMS2 (UBE2N-UBE2V2) heterodimer. Substrates that are polyubiquitinated at 'Lys-63' are usually not targeted for degradation, but are rather involved in signaling cellular stress. This chain is E3 ubiquitin-protein ligase CHFR (Chfr), found in Mus musculus (Mouse).